We begin with the raw amino-acid sequence, 427 residues long: Serine--tRNA ligase (427 aa).

Residue Thr-232–Glu-234 coordinates L-serine. Arg-263–Glu-265 is an ATP binding site. Residue Glu-286 coordinates L-serine. Glu-350 to Ser-353 contacts ATP. Ser-385 contacts L-serine.

Belongs to the class-II aminoacyl-tRNA synthetase family. Type-1 seryl-tRNA synthetase subfamily. As to quaternary structure, homodimer. The tRNA molecule binds across the dimer.

The protein localises to the cytoplasm. The catalysed reaction is tRNA(Ser) + L-serine + ATP = L-seryl-tRNA(Ser) + AMP + diphosphate + H(+). The enzyme catalyses tRNA(Sec) + L-serine + ATP = L-seryl-tRNA(Sec) + AMP + diphosphate + H(+). It functions in the pathway aminoacyl-tRNA biosynthesis; selenocysteinyl-tRNA(Sec) biosynthesis; L-seryl-tRNA(Sec) from L-serine and tRNA(Sec): step 1/1. Catalyzes the attachment of serine to tRNA(Ser). Is also able to aminoacylate tRNA(Sec) with serine, to form the misacylated tRNA L-seryl-tRNA(Sec), which will be further converted into selenocysteinyl-tRNA(Sec). The chain is Serine--tRNA ligase from Lacticaseibacillus paracasei (strain ATCC 334 / BCRC 17002 / CCUG 31169 / CIP 107868 / KCTC 3260 / NRRL B-441) (Lactobacillus paracasei).